Here is a 132-residue protein sequence, read N- to C-terminus: Protein LEKR1 (132 aa).

Residues 37–116 are a coiled coil; sequence FKAMEEKVKA…KKQLSHLQDE (80 aa).

In Homo sapiens (Human), this protein is Protein LEKR1 (LEKR1).